The chain runs to 130 residues: Albumin-1 C (130 aa).

An N-terminal signal peptide occupies residues 1 to 26 (MASVKLASLIVLFATLGMFLTKNVGA). Cystine bridges form between Cys29–Cys46, Cys33–Cys48, and Cys41–Cys58. 2 propeptides span residues 64–69 (VFLRTN) and 123–130 (LLKSVSTA).

Post-translationally, the C-terminal glycine may be removed from PA1b. In terms of tissue distribution, major component of both the cotyledons and embryonic axes of mature seeds.

In terms of biological role, PA1b binds to basic 7S globulin (BG) and stimulates its phosphorylation activity. Involved in the signal transduction system to regulate the growth and differentiation as a hormone peptide. Toxic to various insects through binding to a high affinity binding site in the insect gut. This is Albumin-1 C from Pisum sativum (Garden pea).